The primary structure comprises 1463 residues: DNA-directed RNA polymerase subunit beta'' (1463 aa).

Zn(2+) is bound by residues Cys-239, Cys-312, Cys-319, and Cys-322. Disordered stretches follow at residues 836-869 and 987-1007; these read TFTG…ETRM and TNRS…AQAR. A compositionally biased stretch (polar residues) spans 860 to 869; it reads AANSSHETRM. Over residues 987 to 996 the composition is skewed to basic residues; the sequence is TNRSKTRRNA. Residues 997 to 1007 are compositionally biased toward polar residues; it reads SGKTQVKAQAR.

This sequence belongs to the RNA polymerase beta' chain family. RpoC2 subfamily. In plastids the minimal PEP RNA polymerase catalytic core is composed of four subunits: alpha, beta, beta', and beta''. When a (nuclear-encoded) sigma factor is associated with the core the holoenzyme is formed, which can initiate transcription. Requires Zn(2+) as cofactor.

Its subcellular location is the plastid. It is found in the chloroplast. It carries out the reaction RNA(n) + a ribonucleoside 5'-triphosphate = RNA(n+1) + diphosphate. In terms of biological role, DNA-dependent RNA polymerase catalyzes the transcription of DNA into RNA using the four ribonucleoside triphosphates as substrates. This is DNA-directed RNA polymerase subunit beta'' from Nephroselmis olivacea (Green alga).